A 218-amino-acid polypeptide reads, in one-letter code: Phosphoenolpyruvate guanylyltransferase (218 aa).

The phosphoenolpyruvate site is built by Thr151, Gly166, and Ser169.

This sequence belongs to the CofC family.

The catalysed reaction is phosphoenolpyruvate + GTP + H(+) = enolpyruvoyl-2-diphospho-5'-guanosine + diphosphate. It functions in the pathway cofactor biosynthesis; coenzyme F420 biosynthesis. Functionally, guanylyltransferase that catalyzes the activation of phosphoenolpyruvate (PEP) as enolpyruvoyl-2-diphospho-5'-guanosine, via the condensation of PEP with GTP. It is involved in the biosynthesis of coenzyme F420, a hydride carrier cofactor. This is Phosphoenolpyruvate guanylyltransferase from Mycobacterium sp. (strain KMS).